A 926-amino-acid polypeptide reads, in one-letter code: Alpha-aminoadipic semialdehyde synthase, mitochondrial (926 aa).

Residues 1–27 (MLRAQRPRLARLRACLSRGLHHKPVMA) constitute a mitochondrion transit peptide. Residues 28–455 (LRREDVNAWE…DAVITSNGLL (428 aa)) form a lysine-ketoglutarate reductase region. An N6-acetyllysine mark is found at lysine 48, lysine 52, and lysine 56. Position 93 is an N6-acetyllysine; alternate (lysine 93). Lysine 93 carries the post-translational modification N6-succinyllysine; alternate. At lysine 128 the chain carries N6-acetyllysine. An N6-acetyllysine; alternate modification is found at lysine 138. An N6-succinyllysine; alternate modification is found at lysine 138. Lysine 274 carries the post-translational modification N6-succinyllysine. Lysine 286 is subject to N6-acetyllysine; alternate. Lysine 286 carries the N6-succinyllysine; alternate modification. Position 333 is an N6-succinyllysine (lysine 333). Residue lysine 458 is modified to N6-acetyllysine; alternate. The residue at position 458 (lysine 458) is an N6-succinyllysine; alternate. The segment at 477 to 926 (MSTKKKVLVL…VFNTQSTIKL (450 aa)) is saccharopine dehydrogenase. 3 residues coordinate NAD(+): serine 488, aspartate 512, and glutamine 516. Lysine 523 and lysine 535 each carry N6-acetyllysine; alternate. N6-succinyllysine; alternate occurs at positions 523 and 535. Positions 554, 576, and 577 each coordinate NAD(+). 577-578 (SY) contacts L-saccharopine. The residue at position 584 (lysine 584) is an N6-acetyllysine; alternate. Lysine 584 is modified (N6-succinyllysine; alternate). Residues leucine 603, aspartate 604, and proline 605 each contribute to the NAD(+) site. Aspartate 604 contributes to the L-saccharopine binding site. Arginine 703 contacts L-saccharopine. Lysine 707 carries the post-translational modification N6-acetyllysine. An L-saccharopine-binding site is contributed by 724–726 (TLR). Lysine 732 bears the N6-succinyllysine mark. Lysine 739 is subject to N6-acetyllysine. Residue lysine 761 is modified to N6-acetyllysine; alternate. Lysine 761 is subject to N6-succinyllysine; alternate. N6-acetyllysine is present on residues lysine 778 and lysine 780.

This sequence in the N-terminal section; belongs to the AlaDH/PNT family. The protein in the C-terminal section; belongs to the saccharopine dehydrogenase family. As to quaternary structure, homotetramer. As to expression, highly expressed in kidney and liver, very low expression is seen in heart, brain, spleen, lung, skeletal muscle and testis.

It is found in the mitochondrion. The enzyme catalyses L-saccharopine + NADP(+) + H2O = L-lysine + 2-oxoglutarate + NADPH + H(+). It catalyses the reaction L-saccharopine + NAD(+) + H2O = (S)-2-amino-6-oxohexanoate + L-glutamate + NADH + H(+). The protein operates within amino-acid degradation; L-lysine degradation via saccharopine pathway; glutaryl-CoA from L-lysine: step 1/6. It participates in amino-acid degradation; L-lysine degradation via saccharopine pathway; glutaryl-CoA from L-lysine: step 2/6. Bifunctional enzyme that catalyzes the first two steps in lysine degradation. The polypeptide is Alpha-aminoadipic semialdehyde synthase, mitochondrial (Mus musculus (Mouse)).